The sequence spans 162 residues: Cyclic pyranopterin monophosphate synthase (162 aa).

Substrate contacts are provided by residues 75-77 and 113-114; these read LCH and ME. Residue Asp-128 is part of the active site.

This sequence belongs to the MoaC family. Homohexamer; trimer of dimers.

It catalyses the reaction (8S)-3',8-cyclo-7,8-dihydroguanosine 5'-triphosphate = cyclic pyranopterin phosphate + diphosphate. It participates in cofactor biosynthesis; molybdopterin biosynthesis. In terms of biological role, catalyzes the conversion of (8S)-3',8-cyclo-7,8-dihydroguanosine 5'-triphosphate to cyclic pyranopterin monophosphate (cPMP). The sequence is that of Cyclic pyranopterin monophosphate synthase from Burkholderia lata (strain ATCC 17760 / DSM 23089 / LMG 22485 / NCIMB 9086 / R18194 / 383).